Reading from the N-terminus, the 552-residue chain is Probable glucomannan 4-beta-mannosyltransferase 10 (552 aa).

A helical membrane pass occupies residues Ile62–Ile82. Residue Asp161 is part of the active site. Asp220 and Asp222 together coordinate substrate. Residue Asp314 is part of the active site. Transmembrane regions (helical) follow at residues Ile393 to Phe413, Ile430 to Leu450, Glu509 to Thr529, and Leu530 to Val550.

Belongs to the glycosyltransferase 2 family. Plant cellulose synthase-like A subfamily.

The protein resides in the golgi apparatus membrane. It catalyses the reaction GDP-mannose + (glucomannan)n = GDP + (glucomannan)n+1.. Functionally, probable mannan synthase which consists of a 4-beta-mannosyltransferase activity on mannan using GDP-mannose. The beta-1,4-mannan product is the backbone for galactomannan synthesis by galactomannan galactosyltransferase. Galactomannan is a noncellulosic polysaccharides of plant cell wall. The polypeptide is Probable glucomannan 4-beta-mannosyltransferase 10 (Arabidopsis thaliana (Mouse-ear cress)).